The chain runs to 271 residues: MSTIAASAKIHPTAVVEDGAVIGENVVIGALAYVGPKVTLHDDVRLHNHAVVSGLTVIGRGSVVHPMAVIGGTPQAVRHDGSETTLEIGERCIMREGVTMNAGSSDGGGKTIVGDDNLFLANSHVAHDCRLGRHIILSNNVMLAGHVTIEDRAILGGGCAVHQFTRIGRQAFIGGLSAVNYDVIPYGMLNGNPGILGGLNVVGMTRSGIERADIHKVRRVYKAIFEAEGTIRGNAAAIDRNDYLDCPQALEIIDFIGAGSDRAISSPNRGK.

This sequence belongs to the transferase hexapeptide repeat family. LpxA subfamily. Homotrimer.

It is found in the cytoplasm. It catalyses the reaction a (3R)-hydroxyacyl-[ACP] + UDP-N-acetyl-alpha-D-glucosamine = a UDP-3-O-[(3R)-3-hydroxyacyl]-N-acetyl-alpha-D-glucosamine + holo-[ACP]. Its pathway is glycolipid biosynthesis; lipid IV(A) biosynthesis; lipid IV(A) from (3R)-3-hydroxytetradecanoyl-[acyl-carrier-protein] and UDP-N-acetyl-alpha-D-glucosamine: step 1/6. In terms of biological role, involved in the biosynthesis of lipid A, a phosphorylated glycolipid that anchors the lipopolysaccharide to the outer membrane of the cell. The protein is Acyl-[acyl-carrier-protein]--UDP-N-acetylglucosamine O-acyltransferase of Agrobacterium fabrum (strain C58 / ATCC 33970) (Agrobacterium tumefaciens (strain C58)).